A 209-amino-acid polypeptide reads, in one-letter code: Large ribosomal subunit protein uL3 (209 aa).

The segment covering 112–122 has biased composition (polar residues); sequence GTTRGHGTQGN. Positions 112 to 146 are disordered; the sequence is GTTRGHGTQGNIKRWGQSRGPETHGSRYHRIPGSM.

It belongs to the universal ribosomal protein uL3 family. In terms of assembly, part of the 50S ribosomal subunit. Forms a cluster with proteins L14 and L19.

In terms of biological role, one of the primary rRNA binding proteins, it binds directly near the 3'-end of the 23S rRNA, where it nucleates assembly of the 50S subunit. This chain is Large ribosomal subunit protein uL3, found in Lactobacillus gasseri (strain ATCC 33323 / DSM 20243 / BCRC 14619 / CIP 102991 / JCM 1131 / KCTC 3163 / NCIMB 11718 / NCTC 13722 / AM63).